We begin with the raw amino-acid sequence, 1013 residues long: Ephrin type-B receptor 6 (1013 aa).

The N-terminal stretch at 1 to 31 (MASENTAGSGSRVAGMVYSLWLLVLGPSVLA) is a signal peptide. At 32-590 (LEEVLLDTTG…LPEKLSLVIG (559 aa)) the chain is on the extracellular side. One can recognise an Eph LBD domain in the interval 33–231 (EEVLLDTTGE…FSYTCPSVLR (199 aa)). Fibronectin type-III domains are found at residues 363-478 (PPSA…TSHE) and 479-574 (VPSA…TLPQ). Asn472 carries an N-linked (GlcNAc...) asparagine glycan. A helical membrane pass occupies residues 591–611 (SILGALAFLLLAAITVLAVIF). The Cytoplasmic portion of the chain corresponds to 612 to 1013 (QRKRRGTGYT…HLRQPGSVEV (402 aa)). Residues 662–911 (IKIEEVIGAG…QLVAAFDKMI (250 aa)) enclose the Protein kinase domain. ATP is bound at residue 668–676 (IGAGSFGEV). The SAM domain occupies 940–1004 (PCLDSPQAWL…LHNIQLLQQH (65 aa)). Residues 1011-1013 (VEV) carry the PDZ-binding motif.

This sequence belongs to the protein kinase superfamily. Tyr protein kinase family. Ephrin receptor subfamily. Interacts with CBL and EPHB1. Interacts with FYN; this interaction takes place in a ligand-independent manner. Ligand-binding increases phosphorylation on tyrosine residues. Phosphorylation on tyrosine residues is mediated by transphosphorylation by the catalytically active EPHB1 in a ligand-independent manner. Tyrosine phosphorylation of the receptor may act as a switch on the functional transition from cell adhesion/attraction to de-adhesion/repulsion.

The protein resides in the membrane. In terms of biological role, kinase-defective receptor for members of the ephrin-B family. Binds to ephrin-B1 and ephrin-B2. Modulates cell adhesion and migration by exerting both positive and negative effects upon stimulation with ephrin-B2. Inhibits JNK activation, T-cell receptor-induced IL-2 secretion and CD25 expression upon stimulation with ephrin-B2. In Rattus norvegicus (Rat), this protein is Ephrin type-B receptor 6 (Ephb6).